Reading from the N-terminus, the 95-residue chain is Co-chaperonin GroES (95 aa).

The interval 20–45 (KTKGGLIIPDSAKEKPAEGEITSVGE) is disordered.

It belongs to the GroES chaperonin family. As to quaternary structure, heptamer of 7 subunits arranged in a ring. Interacts with the chaperonin GroEL.

The protein resides in the cytoplasm. In terms of biological role, together with the chaperonin GroEL, plays an essential role in assisting protein folding. The GroEL-GroES system forms a nano-cage that allows encapsulation of the non-native substrate proteins and provides a physical environment optimized to promote and accelerate protein folding. GroES binds to the apical surface of the GroEL ring, thereby capping the opening of the GroEL channel. In Paracoccus denitrificans, this protein is Co-chaperonin GroES.